The chain runs to 103 residues: Small ribosomal subunit protein uS10 (103 aa).

It belongs to the universal ribosomal protein uS10 family. As to quaternary structure, part of the 30S ribosomal subunit.

Its function is as follows. Involved in the binding of tRNA to the ribosomes. This chain is Small ribosomal subunit protein uS10, found in Nitratiruptor sp. (strain SB155-2).